A 480-amino-acid chain; its full sequence is MSRVEGLTSWYSDWQGLSAAILGIGVSGFAAADSLRELGVDVTVYAPEKHTRYNKLLDAIGARYVCAYLDELCEVDVDFIVVSPGISPDNPVIKRLRDRQIPILSEIELAWRVRDKVNTCPWILITGTNGKTTTALLTGSMLAKDGARVAVCGNIGTPVLDAVRNPKGFDYFVVELSSFQLSLLPMHGNGAVKGFSSACVNLDEDHLEWHGAKELYYRAKSRVYHGTTGFCVYNLDDEETKKMVEQACVARNVRAIGFGLCVPDVGQVGIVDGILCDRAFLSARKDSALEITSVEKLEKNKLSMRHIISDVLCAVALARSVETNPLSISRALDEFCLSPHRTEVVAKEMGVMWVNDSKATNPHAVIASLSNFSRVILIFGGLMKGVDVSGIFDRFYETIKAVVVIGKNQSFVGNIKCKKIVCIPDSNDPMSEAVAAADLLATPGDTVLLSPGGSSFDQFESYEHRGNCFINAVKDLVKRK.

Residue 127–133 (GTNGKTT) coordinates ATP.

Belongs to the MurCDEF family.

It is found in the cytoplasm. The enzyme catalyses UDP-N-acetyl-alpha-D-muramoyl-L-alanine + D-glutamate + ATP = UDP-N-acetyl-alpha-D-muramoyl-L-alanyl-D-glutamate + ADP + phosphate + H(+). Its pathway is cell wall biogenesis; peptidoglycan biosynthesis. Functionally, cell wall formation. Catalyzes the addition of glutamate to the nucleotide precursor UDP-N-acetylmuramoyl-L-alanine (UMA). This Tropheryma whipplei (strain TW08/27) (Whipple's bacillus) protein is UDP-N-acetylmuramoylalanine--D-glutamate ligase.